Consider the following 460-residue polypeptide: Probable Xaa-Pro aminopeptidase VDBG_02538 (460 aa).

Positions 256, 267, 390, and 430 each coordinate Mn(2+).

It belongs to the peptidase M24B family. Mn(2+) serves as cofactor.

The enzyme catalyses Release of any N-terminal amino acid, including proline, that is linked to proline, even from a dipeptide or tripeptide.. Functionally, catalyzes the removal of a penultimate prolyl residue from the N-termini of peptides. The protein is Probable Xaa-Pro aminopeptidase VDBG_02538 of Verticillium alfalfae (strain VaMs.102 / ATCC MYA-4576 / FGSC 10136) (Verticillium wilt of alfalfa).